We begin with the raw amino-acid sequence, 126 residues long: UPF0738 protein BH2850 (126 aa).

It belongs to the UPF0738 family.

The protein is UPF0738 protein BH2850 of Halalkalibacterium halodurans (strain ATCC BAA-125 / DSM 18197 / FERM 7344 / JCM 9153 / C-125) (Bacillus halodurans).